A 162-amino-acid chain; its full sequence is Large ribosomal subunit protein uL10 (162 aa).

The protein belongs to the universal ribosomal protein uL10 family. As to quaternary structure, part of the ribosomal stalk of the 50S ribosomal subunit. The N-terminus interacts with L11 and the large rRNA to form the base of the stalk. The C-terminus forms an elongated spine to which L12 dimers bind in a sequential fashion forming a multimeric L10(L12)X complex.

Its function is as follows. Forms part of the ribosomal stalk, playing a central role in the interaction of the ribosome with GTP-bound translation factors. The sequence is that of Large ribosomal subunit protein uL10 from Borreliella afzelii (strain PKo) (Borrelia afzelii).